We begin with the raw amino-acid sequence, 208 residues long: EF-hand protein 5 variant 1 (208 aa).

The disordered stretch occupies residues 1 to 34 (MQARGTVKVQGDAKVDGKMSTGQHSHHQHLNSTQ). 4 consecutive EF-hand domains span residues 64-98 (MAEGFYVLSGGYKKLFIPSKDVYALMQNVGMHLTE), 99-134 (EEFHDALRVIGQSEPQNADELSFSDFLLLMTREVDD), 135-170 (TMADELRSAFFHYDKYKTGYVTRKQFTELFATLGER), and 171-206 (STPEELEELLAVAEVDETDDKIDYNRFVNELTSRVN). The Ca(2+) site is built by glutamate 118, aspartate 123, aspartate 148, threonine 152, and tyrosine 154.

This Trypanosoma cruzi protein is EF-hand protein 5 variant 1.